We begin with the raw amino-acid sequence, 248 residues long: Large ribosomal subunit protein uL4 (248 aa).

Residues 69–92 (HVPRLKNGSRAAKVPQAKGGREAH) form a disordered region.

It belongs to the universal ribosomal protein uL4 family. In terms of assembly, part of the 50S ribosomal subunit.

One of the primary rRNA binding proteins, this protein initially binds near the 5'-end of the 23S rRNA. It is important during the early stages of 50S assembly. It makes multiple contacts with different domains of the 23S rRNA in the assembled 50S subunit and ribosome. In terms of biological role, forms part of the polypeptide exit tunnel. This chain is Large ribosomal subunit protein uL4, found in Methanoregula boonei (strain DSM 21154 / JCM 14090 / 6A8).